The sequence spans 591 residues: DEAD-box ATP-dependent RNA helicase 35 (591 aa).

The Q motif signature appears at 146-174 (KNFKDMKFPRPVLDTLKEKGIVQPTPIQV). One can recognise a Helicase ATP-binding domain in the interval 177–361 (LPVILAGRDM…RSALVKPVTV (185 aa)). ATP is bound at residue 190 to 197 (AFTGSGKT). The short motif at 309–312 (DEAD) is the DEAD box element. The Helicase C-terminal domain maps to 372 to 532 (DVIQEVEYVK…RIPPVLAELN (161 aa)). The CCHC-type zinc-finger motif lies at 548–565 (KGCAYCGGLGHRIRDCPK).

Belongs to the DEAD box helicase family. DDX41 subfamily.

It catalyses the reaction ATP + H2O = ADP + phosphate + H(+). In Arabidopsis thaliana (Mouse-ear cress), this protein is DEAD-box ATP-dependent RNA helicase 35 (RH35).